The following is a 415-amino-acid chain: Histidine--tRNA ligase (415 aa).

The protein belongs to the class-II aminoacyl-tRNA synthetase family. In terms of assembly, homodimer.

It is found in the cytoplasm. The enzyme catalyses tRNA(His) + L-histidine + ATP = L-histidyl-tRNA(His) + AMP + diphosphate + H(+). This is Histidine--tRNA ligase from Clostridium perfringens (strain SM101 / Type A).